A 470-amino-acid polypeptide reads, in one-letter code: UDP-N-acetylmuramate--L-alanine ligase (470 aa).

118–124 (GTHGKTT) contacts ATP.

It belongs to the MurCDEF family.

The protein resides in the cytoplasm. The enzyme catalyses UDP-N-acetyl-alpha-D-muramate + L-alanine + ATP = UDP-N-acetyl-alpha-D-muramoyl-L-alanine + ADP + phosphate + H(+). It functions in the pathway cell wall biogenesis; peptidoglycan biosynthesis. Functionally, cell wall formation. The sequence is that of UDP-N-acetylmuramate--L-alanine ligase from Cereibacter sphaeroides (strain ATCC 17025 / ATH 2.4.3) (Rhodobacter sphaeroides).